We begin with the raw amino-acid sequence, 622 residues long: Probable ATP-dependent RNA helicase DDX41 (622 aa).

Residues 1–15 (MEESEPERKRARTDE) show a composition bias toward basic and acidic residues. Disordered stretches follow at residues 1–39 (MEES…YVPL) and 52–84 (QRRR…PQSN). Serine 4 is modified (phosphoserine). The residue at position 9 (lysine 9) is an N6-acetyllysine. A Glycyl lysine isopeptide (Lys-Gly) (interchain with G-Cter in ubiquitin) cross-link involves residue lysine 9. Phosphoserine is present on residues serine 21 and serine 23. Position 33 is a phosphotyrosine (tyrosine 33). Lysine 115 is covalently cross-linked (Glycyl lysine isopeptide (Lys-Gly) (interchain with G-Cter in ubiquitin)). Positions 181–209 (KSFKEMKFPAAILRGLKKKGIHHPTPIQI) match the Q motif motif. One can recognise a Helicase ATP-binding domain in the interval 212–396 (IPTILSGRDM…KSALVKPVTI (185 aa)). 225-232 (AFTGSGKT) contributes to the ATP binding site. Residues 344-347 (DEAD) carry the DEAD box motif. Residues 407–567 (DVIQEVEYVK…KVPPVLQVLH (161 aa)) form the Helicase C-terminal domain. The residue at position 414 (tyrosine 414) is a Phosphotyrosine; by BTK. Glycyl lysine isopeptide (Lys-Gly) (interchain with G-Cter in SUMO2) cross-links involve residues lysine 416 and lysine 442. A CCHC-type zinc finger spans residues 580-597 (RGCAFCGGLGHRITDCPK).

It belongs to the DEAD box helicase family. DDX41 subfamily. Identified in the spliceosome C complex. Interacts with ERCC6. Interacts with FAM50A. Interacts with STING1. Interacts with CGAS. Interacts with several spliceosomes components such as PRP19 or CDC5L. In terms of processing, acetylation at Lys-9 regulates the nuclear/cytoplasmic localization. Phosphorylated by BTK; phosphorylation induces binding to dsDNA and STING1. Post-translationally, 'Lys-48'-linked ubiquitinated and degraded by TRIM21 leading to negative regulation of the innate immune response to intracellular dsDNA.

Its subcellular location is the nucleus. The protein localises to the cytoplasm. The enzyme catalyses ATP + H2O = ADP + phosphate + H(+). Functionally, multifunctional protein that participates in many aspects of cellular RNA metabolism. Plays pivotal roles in innate immune sensing and hematopoietic homeostasis. Recognizes foreign or self-nucleic acids generated during microbial infection, thereby initiating anti-pathogen responses. Mechanistically, phosphorylation by BTK allows binding to dsDNA leading to interaction with STING1. Modulates the homeostasis of dsDNA through its ATP-dependent DNA-unwinding activity and ATP-independent strand-annealing activity. In turn, induces STING1-mediated type I interferon and cytokine responses to DNA and DNA viruses. Selectively modulates the transcription of certain immunity-associated genes by regulating their alternative splicing. Binds to RNA (R)-loops, structures consisting of DNA/RNA hybrids and a displaced strand of DNA that occur during transcription, and prevents their accumulation, thereby maintaining genome stability. Also participates in pre-mRNA splicing, translational regulation and snoRNA processing, which is essential for ribosome biogenesis. This is Probable ATP-dependent RNA helicase DDX41 (DDX41) from Homo sapiens (Human).